The primary structure comprises 726 residues: Catalase-peroxidase (726 aa).

Positions 85-208 (WHSAGSYRIH…FAATEMGLIY (124 aa)) form a cross-link, tryptophyl-tyrosyl-methioninium (Trp-Tyr) (with M-234). The active-site Proton acceptor is His-86. The segment at residues 208 to 234 (YVNPEGPMGNPDPSGSAKEIRLAFTRM) is a cross-link (tryptophyl-tyrosyl-methioninium (Tyr-Met) (with W-85)). His-249 lines the heme b pocket.

Belongs to the peroxidase family. Peroxidase/catalase subfamily. As to quaternary structure, homodimer or homotetramer. The cofactor is heme b. In terms of processing, formation of the three residue Trp-Tyr-Met cross-link is important for the catalase, but not the peroxidase activity of the enzyme.

It catalyses the reaction H2O2 + AH2 = A + 2 H2O. It carries out the reaction 2 H2O2 = O2 + 2 H2O. Functionally, bifunctional enzyme with both catalase and broad-spectrum peroxidase activity. The protein is Catalase-peroxidase of Pseudothermotoga lettingae (strain ATCC BAA-301 / DSM 14385 / NBRC 107922 / TMO) (Thermotoga lettingae).